The following is a 181-amino-acid chain: Large ribosomal subunit protein uL6 (181 aa).

It belongs to the universal ribosomal protein uL6 family. Part of the 50S ribosomal subunit.

In terms of biological role, this protein binds to the 23S rRNA, and is important in its secondary structure. It is located near the subunit interface in the base of the L7/L12 stalk, and near the tRNA binding site of the peptidyltransferase center. The protein is Large ribosomal subunit protein uL6 of Flavobacterium psychrophilum (strain ATCC 49511 / DSM 21280 / CIP 103535 / JIP02/86).